The primary structure comprises 928 residues: Serine/threonine-protein kinase atg1 (928 aa).

Residues 6–315 form the Protein kinase domain; the sequence is YTRLDEIGRG…FPEFFENEVI (310 aa). Residues 12-20 and lysine 35 contribute to the ATP site; that span reads IGRGSFATV. Aspartate 149 (proton acceptor) is an active-site residue. Disordered stretches follow at residues 318–470 and 544–571; these read PIPG…EQER and FSGR…PTSA. Basic and acidic residues predominate over residues 359–371; that stretch reads TRREREVNREDVY. Polar residues predominate over residues 437 to 452; the sequence is TTTAIERQRSRNTYSE. Basic and acidic residues-rich tracts occupy residues 459–470 and 548–564; these read QPADKLKEEQER and SRAD…ERRY.

The protein belongs to the protein kinase superfamily. Ser/Thr protein kinase family. APG1/unc-51/ULK1 subfamily. In terms of assembly, homodimer. Forms a ternary complex with ATG13 and ATG17.

The protein resides in the cytoplasm. The protein localises to the preautophagosomal structure membrane. It catalyses the reaction L-seryl-[protein] + ATP = O-phospho-L-seryl-[protein] + ADP + H(+). The catalysed reaction is L-threonyl-[protein] + ATP = O-phospho-L-threonyl-[protein] + ADP + H(+). In terms of biological role, serine/threonine protein kinase involved in the cytoplasm to vacuole transport (Cvt) and found to be essential in autophagy, where it is required for the formation of autophagosomes. Involved in the clearance of protein aggregates which cannot be efficiently cleared by the proteasome. Required for selective autophagic degradation of the nucleus (nucleophagy) as well as for mitophagy which contributes to regulate mitochondrial quantity and quality by eliminating the mitochondria to a basal level to fulfill cellular energy requirements and preventing excess ROS production. Also involved in endoplasmic reticulum-specific autophagic process, in selective removal of ER-associated degradation (ERAD) substrates. Plays a key role in ATG9 and ATG23 cycling through the pre-autophagosomal structure and is necessary to promote ATG18 binding to ATG9 through phosphorylation of ATG9. Catalyzes phosphorylation of ATG4, decreasing the interaction between ATG4 and ATG8 and impairing deconjugation of PE-conjugated forms of ATG8. This is Serine/threonine-protein kinase atg1 from Aspergillus clavatus (strain ATCC 1007 / CBS 513.65 / DSM 816 / NCTC 3887 / NRRL 1 / QM 1276 / 107).